A 522-amino-acid polypeptide reads, in one-letter code: MSEIWEDAIKSNAWPFVEAKKILDSLNGQIPEKGYVLFETGYGPSGLPHIGTFGENARMVMVQKAFEQLSDIPTKLICFSDDMDGLRKVPSNIPNPEMVAQYMDMPLTSIPDTFGECESYGHYMNAKLRSFLDKFGFEYEFYSSTNCYKAGMFDAMLIMVLEKYDEIMELMLPTFREERKATYSPFMPICPKTGKVLQVPIEKWDAKAGTVTYKDKAGNYIEVPVTGGHCKLQWKPDFGMRWAALKVDYEMYGKDHLANARLYSEICRILGGKPPVQLCYELFLDENGKKISKSKGNSISIDDWLKYAPVESMALFMYQNPTRAKRLFFDVIPKNVDEYITFNQKYHLEEDRAKRFANPVYHIHHGNVPKIETFGITYSLLLNLTSVCNPSDKSVLWGFISKYEPKATPNTNPYLDHLAEFAIRYYNDFIKAHKLYLSPSEKHKVILQDILDMLSDIADQTEAEAIQKAIYDIGMKAGYENLRDYFKDLYQILLGQNEGPRFGTFIKLYGVQEMKKLVEGQL.

The 'HIGH' region motif lies at 44–52 (PSGLPHIGT). Residues 290 to 294 (KISKS) carry the 'KMSKS' region motif. Lys293 lines the ATP pocket.

Belongs to the class-I aminoacyl-tRNA synthetase family.

The protein resides in the cytoplasm. It catalyses the reaction tRNA(Lys) + L-lysine + ATP = L-lysyl-tRNA(Lys) + AMP + diphosphate. The sequence is that of Lysine--tRNA ligase from Rickettsia conorii (strain ATCC VR-613 / Malish 7).